The sequence spans 692 residues: Methionine--tRNA ligase (692 aa).

The 'HIGH' region motif lies at 12-22 (PYANGSFHIGH). Positions 143, 146, 156, and 159 each coordinate Zn(2+). The 'KMSKS' region signature appears at 341–345 (KMSKS). K344 contacts ATP. Residues 586–692 (DFAKIDLRIA…PGAQPGMRVR (107 aa)) form the tRNA-binding domain.

Belongs to the class-I aminoacyl-tRNA synthetase family. MetG type 1 subfamily. Homodimer. The cofactor is Zn(2+).

The protein resides in the cytoplasm. It carries out the reaction tRNA(Met) + L-methionine + ATP = L-methionyl-tRNA(Met) + AMP + diphosphate. In terms of biological role, is required not only for elongation of protein synthesis but also for the initiation of all mRNA translation through initiator tRNA(fMet) aminoacylation. This Bordetella parapertussis (strain 12822 / ATCC BAA-587 / NCTC 13253) protein is Methionine--tRNA ligase.